Consider the following 412-residue polypeptide: Tryptophan synthase beta chain 1 (412 aa).

An N6-(pyridoxal phosphate)lysine modification is found at Lys103.

It belongs to the TrpB family. Tetramer of two alpha and two beta chains. Pyridoxal 5'-phosphate serves as cofactor.

It carries out the reaction (1S,2R)-1-C-(indol-3-yl)glycerol 3-phosphate + L-serine = D-glyceraldehyde 3-phosphate + L-tryptophan + H2O. Its pathway is amino-acid biosynthesis; L-tryptophan biosynthesis; L-tryptophan from chorismate: step 5/5. Functionally, the beta subunit is responsible for the synthesis of L-tryptophan from indole and L-serine. In Chlamydia caviae (strain ATCC VR-813 / DSM 19441 / 03DC25 / GPIC) (Chlamydophila caviae), this protein is Tryptophan synthase beta chain 1 (trpB1).